The chain runs to 633 residues: Chaperone protein HtpG (633 aa).

The segment at 1-344 is a; substrate-binding; the sequence is MSLQPQAETL…SNDLPLNISR (344 aa). Positions 345–560 are b; that stretch reads ELLQSNEVIN…ENEMSGHLQR (216 aa). Positions 561–633 are c; it reads LLIQTGQDFM…KGLNELLLDS (73 aa).

It belongs to the heat shock protein 90 family. Homodimer.

The protein localises to the cytoplasm. Molecular chaperone. Has ATPase activity. This Coxiella burnetii (strain RSA 493 / Nine Mile phase I) protein is Chaperone protein HtpG.